The sequence spans 298 residues: Lipoyl synthase (298 aa).

[4Fe-4S] cluster contacts are provided by Cys-40, Cys-45, Cys-51, Cys-67, Cys-71, Cys-74, and Ser-280. The Radical SAM core domain occupies 53–269; sequence AVRKTATFMI…KEIALSKGFS (217 aa).

It belongs to the radical SAM superfamily. Lipoyl synthase family. It depends on [4Fe-4S] cluster as a cofactor.

The protein resides in the cytoplasm. The enzyme catalyses [[Fe-S] cluster scaffold protein carrying a second [4Fe-4S](2+) cluster] + N(6)-octanoyl-L-lysyl-[protein] + 2 oxidized [2Fe-2S]-[ferredoxin] + 2 S-adenosyl-L-methionine + 4 H(+) = [[Fe-S] cluster scaffold protein] + N(6)-[(R)-dihydrolipoyl]-L-lysyl-[protein] + 4 Fe(3+) + 2 hydrogen sulfide + 2 5'-deoxyadenosine + 2 L-methionine + 2 reduced [2Fe-2S]-[ferredoxin]. The protein operates within protein modification; protein lipoylation via endogenous pathway; protein N(6)-(lipoyl)lysine from octanoyl-[acyl-carrier-protein]. In terms of biological role, catalyzes the radical-mediated insertion of two sulfur atoms into the C-6 and C-8 positions of the octanoyl moiety bound to the lipoyl domains of lipoate-dependent enzymes, thereby converting the octanoylated domains into lipoylated derivatives. This Bacillus mycoides (strain KBAB4) (Bacillus weihenstephanensis) protein is Lipoyl synthase.